A 1038-amino-acid polypeptide reads, in one-letter code: Protein transport protein SEC24 A (1038 aa).

The segment at 1–247 is disordered; that stretch reads MGTENQGYPN…PPHTGGFAQR (247 aa). Positions 22 to 33 are enriched in pro residues; it reads SAPPPGIPPQSG. Cysteine 371, cysteine 374, cysteine 393, and cysteine 396 together coordinate Zn(2+). Residues 371–396 are zinc finger-like; sequence CRRCRTYVNPFVTFTDSGRKWRCNIC.

It belongs to the SEC23/SEC24 family. SEC24 subfamily. In terms of assembly, component of the coat protein complex II (COPII), composed of at least five proteins: the Sec23/24 complex, the Sec13/31 complex and Sar1. Interacts with SEC221, SEC23E/SEC23A, SEC23B, SEC23G/SEC23C and SEC23F/SEC23D. As to quaternary structure, (Microbial infection) Interacts with turnip mosaic virus (TuMV) 6K2 in COPII-coated vesicles. Mainly expressed in pollen, leaves, inflorescences, roots and stems, and, to a lower extent, in cotyledons, petioles and hypocotyls.

It is found in the cytoplasmic vesicle. It localises to the COPII-coated vesicle membrane. Its subcellular location is the endoplasmic reticulum membrane. The protein resides in the golgi apparatus membrane. The protein localises to the cytoplasm. It is found in the cytosol. Its function is as follows. Essential protein. Component of the coat protein complex II (COPII), that covers ER-derived vesicles involved in transport from the endoplasmic reticulum to the Golgi apparatus. COPII is composed of at least five proteins: the SEC23/24 complex, the SEC13/31 complex, and the protein SAR1. Acts in the cytoplasm to promote the transport of secretory, plasma membrane, and vacuolar proteins from the endoplasmic reticulum to the Golgi complex. Involved in maintaining the dynamic identity of organelles of the early secretory pathway. Regulates cell size patterning, and prevents CDKA;1-, DEK1- and ACR4-dependent endoreduplication and giant cells formation in sepals. Required for male gametophytes (pollen grains) development and transmission. (Microbial infection) Contributes to viral systemic infection of turnip mosaic virus (TuMV) by triggering the formation of host endoplasmic reticulum (ER)-derived viral vesicles that carry the viral RNA (vRNA) to plasmodesmata for cell-to-cell viral movement. The chain is Protein transport protein SEC24 A from Arabidopsis thaliana (Mouse-ear cress).